A 467-amino-acid polypeptide reads, in one-letter code: Calcium-binding protein P (467 aa).

2 stretches are compositionally biased toward pro residues: residues 1-10 (MQNPQNPPPA) and 45-62 (QYPPQQPGAPGSNLPPYP). The segment at 1 to 311 (MQNPQNPPPA…GAYPGQPPMG (311 aa)) is disordered. The XYPPX signature appears at 45 to 49 (QYPPQ). Low complexity predominate over residues 63 to 74 (GTQQPGAPGAPG). 17 short sequence motifs (XYPPX) span residues 75 to 79 (QYPPQ), 83 to 87 (QYPPQ), 94 to 98 (QYPPQ), 104 to 108 (GYPPQ), 115 to 119 (QYPPQ), 125 to 129 (GYPPQ), 136 to 140 (QYPPQ), 146 to 150 (QYPPQ), 157 to 161 (QYPPQ), 165 to 169 (QYPPQ), 176 to 180 (AYPPQ), 187 to 191 (AYPPQ), 221 to 225 (GVPPQ), 238 to 242 (AYPPQ), 247 to 251 (AYPPQ), 256 to 260 (AYPPQ), and 275 to 279 (AYPPQ). Composition is skewed to pro residues over residues 75–109 (QYPPQQPGQYPPQQPGAPGQYPPQQPGQPGYPPQQ) and 118–131 (PQQPGQPGYPPQQP). Positions 132–145 (GAPGQYPPQQGQPG) are enriched in low complexity. Composition is skewed to low complexity over residues 153-193 (GQPG…PQQG) and 215-246 (AYPGQPGVPPQQGAYPGQQPPMGAYPPQGQPG). The span at 253-311 (QPGAYPPQQQQVAYPGQQPPMGAYPPQQGAYPGQQGAYPGQQGAYPGQQGAYPGQPPMG) shows a compositional bias: low complexity. 2 consecutive EF-hand domains span residues 399–434 (QKMMAASAAFRIHDSNCSGTLSKKEFKKLIKHLGYY) and 435–467 (FSKGQTKMLFHSIDRDYSGSLSEREFVDWWSMQ). Residues Asp-412, Asn-414, Ser-416, Thr-418, and Glu-423 each coordinate Ca(2+).

The chain is Calcium-binding protein P (cbpP) from Dictyostelium discoideum (Social amoeba).